Consider the following 513-residue polypeptide: RNA-splicing ligase RtcB homolog (513 aa).

Mn(2+) is bound by residues D127, C130, H235, H267, and H361. 234-238 contributes to the GMP binding site; the sequence is NHYAE. GMP-binding positions include 361-362, 410-413, S417, 436-439, and K512; these read HN, GGTM, and HGAG. Catalysis depends on H436, which acts as the GMP-histidine intermediate.

This sequence belongs to the RtcB family. In terms of assembly, catalytic component of the tRNA-splicing ligase complex. The cofactor is Mn(2+).

It carries out the reaction a 3'-end 3'-phospho-ribonucleotide-RNA + a 5'-end dephospho-ribonucleoside-RNA + GTP = a ribonucleotidyl-ribonucleotide-RNA + GMP + diphosphate. The catalysed reaction is a 3'-end 2',3'-cyclophospho-ribonucleotide-RNA + a 5'-end dephospho-ribonucleoside-RNA + GTP + H2O = a ribonucleotidyl-ribonucleotide-RNA + GMP + diphosphate + H(+). Its function is as follows. Catalytic subunit of the tRNA-splicing ligase complex that acts by directly joining spliced tRNA halves to mature-sized tRNAs by incorporating the precursor-derived splice junction phosphate into the mature tRNA as a canonical 3',5'-phosphodiester. May act as an RNA ligase with broad substrate specificity, and may function toward other RNAs. The protein is RNA-splicing ligase RtcB homolog of Micromonas commoda (strain RCC299 / NOUM17 / CCMP2709) (Picoplanktonic green alga).